We begin with the raw amino-acid sequence, 582 residues long: MGSCVSSPLKGSPFGKRPVRRRHSSNSRTSSVPRFDSSTNLSRRLIFQPPSRVLPEPIGDGIHLKYDLGKELGRGEFGVTHECIEISTRERFACKRISKEKLRTEIDVEDVRREVEIMRCLPKHPNIVSFKEAFEDKDAVYLVMEICEGGELFDRIVSRGHYTERAAASVAKTILEVVKVCHEHGVIHRDLKPENFLFSNGTETAQLKAIDFGLSIFFKPAQRFNEIVGSPYYMAPEVLRRNYGPEIDVWSAGVILYILLCGVPPFWAETEEGIAHAIVRGNIDFERDPWPKVSHEAKELVKNMLDANPYSRLTVQEVLEHPWIRNAERAPNVNLGDNVRTKIQQFLLMNRFKKKVLRIVADNLPNEEIAAIVQMFQTMDTDKNGHLTFEELRDGLKKIGQVVPDGDVKMLMDAADTDGNGMLSCDEFVTLSIHLKRMGCDEHLQEAFKYFDKNGNGFIELDELKVALCDDKLGHANGNDQWIKDIFFDVDLNKDGRISFDEFKAMMKSGTDWKMASRQYSRALLNALSIKMFKEDFGDNGPKSHSMEFPIARKRAKLLDAPKNKSMELQISKTYKPSGLRN.

A disordered region spans residues 1–36 (MGSCVSSPLKGSPFGKRPVRRRHSSNSRTSSVPRFD). Residue glycine 2 is the site of N-myristoyl glycine attachment. Positions 66-324 (YDLGKELGRG…VQEVLEHPWI (259 aa)) constitute a Protein kinase domain. ATP contacts are provided by residues 72-80 (LGRGEFGVT) and lysine 95. Aspartate 190 serves as the catalytic Proton acceptor. Residue serine 230 is modified to Phosphoserine. Residues 330–360 (APNVNLGDNVRTKIQQFLLMNRFKKKVLRIV) are autoinhibitory domain. EF-hand domains follow at residues 367 to 402 (EEIAAIVQMFQTMDTDKNGHLTFEELRDGLKKIGQV), 403 to 438 (VPDGDVKMLMDAADTDGNGMLSCDEFVTLSIHLKRM), 439 to 474 (GCDEHLQEAFKYFDKNGNGFIELDELKVALCDDKLG), and 478 to 513 (GNDQWIKDIFFDVDLNKDGRISFDEFKAMMKSGTDW). Residues aspartate 380, aspartate 382, asparagine 384, histidine 386, glutamate 391, aspartate 416, aspartate 418, asparagine 420, methionine 422, glutamate 427, aspartate 452, asparagine 454, asparagine 456, glutamate 463, aspartate 491, asparagine 493, aspartate 495, and arginine 497 each contribute to the Ca(2+) site. Phosphoserine is present on serine 499. Glutamate 502 lines the Ca(2+) pocket.

Belongs to the protein kinase superfamily. Ser/Thr protein kinase family. CDPK subfamily.

Its subcellular location is the membrane. It catalyses the reaction L-seryl-[protein] + ATP = O-phospho-L-seryl-[protein] + ADP + H(+). It carries out the reaction L-threonyl-[protein] + ATP = O-phospho-L-threonyl-[protein] + ADP + H(+). Its activity is regulated as follows. Activated by calcium. Autophosphorylation may play an important role in the regulation of the kinase activity. Functionally, may play a role in signal transduction pathways that involve calcium as a second messenger. In Arabidopsis thaliana (Mouse-ear cress), this protein is Calcium-dependent protein kinase 24 (CPK24).